Here is a 322-residue protein sequence, read N- to C-terminus: Adenine deaminase (322 aa).

The Zn(2+) site is built by His-11, His-13, and His-189. Glu-192 serves as the catalytic Proton donor. Zn(2+) is bound at residue Asp-270. Asp-271 is a substrate binding site.

The protein belongs to the metallo-dependent hydrolases superfamily. Adenosine and AMP deaminases family. Adenine deaminase type 2 subfamily. Requires Zn(2+) as cofactor.

It catalyses the reaction adenine + H2O + H(+) = hypoxanthine + NH4(+). Catalyzes the hydrolytic deamination of adenine to hypoxanthine. Plays an important role in the purine salvage pathway and in nitrogen catabolism. The sequence is that of Adenine deaminase from Rhizobium rhizogenes (strain K84 / ATCC BAA-868) (Agrobacterium radiobacter).